Reading from the N-terminus, the 404-residue chain is Zinc metalloprotease Rip1 (404 aa).

A helical transmembrane segment spans residues 1 to 21 (MMFVTGIVLFALAILISVALH). H21 serves as a coordination point for Zn(2+). E22 is an active-site residue. H25 provides a ligand contact to Zn(2+). Residues 104–124 (PGMNLAICLVLIYAIALVWGL) traverse the membrane as a helical segment. The PDZ domain occupies 121–203 (VWGLPNLHPP…SVPIVVERDG (83 aa)). Residue D202 coordinates Zn(2+). 2 consecutive transmembrane segments (helical) span residues 313–333 (LWVAFWFFLAQLNLILATINL) and 373–393 (LLPATYVVLVLVVGYMLLTVT).

Belongs to the peptidase M50B family. The cofactor is Zn(2+).

It localises to the cell membrane. A probable intramembrane site-2 protease (S2P) that cleaves type-2 transmembrane proteins within their membrane-spanning domains. Cleaves PbpB (PBP3, FtsI); cleavage is inhibited by Wag31-PbpB interaction. Probably also cleaves anti-sigma factors RskA, RslA and RsmA. In terms of biological role, regulated intramembrane proteolysis (RIP) occurs when an extracytoplasmic signal (possibly oxidative stress) triggers a concerted proteolytic cascade to transmit information and elicit cellular responses. The membrane-spanning regulatory substrate protein (includes anti-sigma factors RskA, RslA, RsmA, and PbpB in M.tuberculosis) is first cut extracytoplasmically (site-1 protease, S1P), then within the membrane itself (site-2 protease, S2P, this entry), while cytoplasmic proteases finish degrading the regulatory protein, liberating the effector protein (ECF sigma factors SigK, SigL and SigM). The polypeptide is Zinc metalloprotease Rip1 (rip1) (Mycobacterium bovis (strain BCG / Pasteur 1173P2)).